The sequence spans 340 residues: Cytosolic Fe-S cluster assembly factor NBP35 (340 aa).

[4Fe-4S] cluster is bound by residues C31, C45, C48, and C54. 84-91 (GKGGVGKS) is an ATP binding site. C257 and C260 together coordinate [4Fe-4S] cluster.

This sequence belongs to the Mrp/NBP35 ATP-binding proteins family. NUBP1/NBP35 subfamily. In terms of assembly, heterotetramer of 2 NBP35 and 2 CFD1 chains. The cofactor is [4Fe-4S] cluster.

The protein resides in the cytoplasm. Its function is as follows. Component of the cytosolic iron-sulfur (Fe/S) protein assembly (CIA) machinery. Required for maturation of extramitochondrial Fe-S proteins. The NBP35-CFD1 heterotetramer forms a Fe-S scaffold complex, mediating the de novo assembly of an Fe-S cluster and its transfer to target apoproteins. This chain is Cytosolic Fe-S cluster assembly factor NBP35, found in Phaeosphaeria nodorum (strain SN15 / ATCC MYA-4574 / FGSC 10173) (Glume blotch fungus).